Consider the following 429-residue polypeptide: Probable M18 family aminopeptidase 2 (429 aa).

Residues H82, H156, and H401 each coordinate Zn(2+).

The protein belongs to the peptidase M18 family. Requires Zn(2+) as cofactor.

In Pseudomonas savastanoi pv. phaseolicola (strain 1448A / Race 6) (Pseudomonas syringae pv. phaseolicola (strain 1448A / Race 6)), this protein is Probable M18 family aminopeptidase 2.